The sequence spans 101 residues: NAD(P)H-quinone oxidoreductase subunit 4L, chloroplastic (101 aa).

A run of 3 helical transmembrane segments spans residues 2–22, 32–52, and 61–81; these read ILEH…YGLI, MCLE…SDFF, and IFCI…LAIV.

It belongs to the complex I subunit 4L family. NDH is composed of at least 16 different subunits, 5 of which are encoded in the nucleus.

The protein resides in the plastid. It localises to the chloroplast thylakoid membrane. The catalysed reaction is a plastoquinone + NADH + (n+1) H(+)(in) = a plastoquinol + NAD(+) + n H(+)(out). The enzyme catalyses a plastoquinone + NADPH + (n+1) H(+)(in) = a plastoquinol + NADP(+) + n H(+)(out). NDH shuttles electrons from NAD(P)H:plastoquinone, via FMN and iron-sulfur (Fe-S) centers, to quinones in the photosynthetic chain and possibly in a chloroplast respiratory chain. The immediate electron acceptor for the enzyme in this species is believed to be plastoquinone. Couples the redox reaction to proton translocation, and thus conserves the redox energy in a proton gradient. The polypeptide is NAD(P)H-quinone oxidoreductase subunit 4L, chloroplastic (Arabis hirsuta (Hairy rock-cress)).